The following is a 417-amino-acid chain: Nuclear envelope integral membrane protein 2 (417 aa).

An N-terminal signal peptide occupies residues 1–24; it reads MGPRQGRWWLLLWLPPLATLPVRG. The next 5 helical transmembrane spans lie at 148–168, 177–197, 207–227, 239–259, and 280–300; these read NIMDFKLFLVFVAGVFLFFYA, FYYSSGTVLGVLMTLVFVLLL, TFWALMVGCWFASVYIVCQLM, IYVLGYVLIVGFFSFVVCYKH, and LVLVYAGVAVPQFAYAAIILL.

It belongs to the NEMP family.

The protein resides in the nucleus inner membrane. This chain is Nuclear envelope integral membrane protein 2 (NEMP2), found in Homo sapiens (Human).